The sequence spans 431 residues: Glutamate-1-semialdehyde 2,1-aminomutase (431 aa).

An N6-(pyridoxal phosphate)lysine modification is found at K269.

The protein belongs to the class-III pyridoxal-phosphate-dependent aminotransferase family. HemL subfamily. As to quaternary structure, homodimer. Pyridoxal 5'-phosphate is required as a cofactor.

It localises to the cytoplasm. The enzyme catalyses (S)-4-amino-5-oxopentanoate = 5-aminolevulinate. It participates in porphyrin-containing compound metabolism; protoporphyrin-IX biosynthesis; 5-aminolevulinate from L-glutamyl-tRNA(Glu): step 2/2. The protein operates within porphyrin-containing compound metabolism; chlorophyll biosynthesis. The chain is Glutamate-1-semialdehyde 2,1-aminomutase from Chlorobium phaeobacteroides (strain DSM 266 / SMG 266 / 2430).